Consider the following 193-residue polypeptide: 3-isopropylmalate dehydratase small subunit (193 aa).

The protein belongs to the LeuD family. LeuD type 1 subfamily. As to quaternary structure, heterodimer of LeuC and LeuD.

The catalysed reaction is (2R,3S)-3-isopropylmalate = (2S)-2-isopropylmalate. The protein operates within amino-acid biosynthesis; L-leucine biosynthesis; L-leucine from 3-methyl-2-oxobutanoate: step 2/4. Functionally, catalyzes the isomerization between 2-isopropylmalate and 3-isopropylmalate, via the formation of 2-isopropylmaleate. In Bacillus cereus (strain 03BB102), this protein is 3-isopropylmalate dehydratase small subunit.